Here is a 187-residue protein sequence, read N- to C-terminus: Dihydrofolate reductase type A10 (187 aa).

The DHFR domain maps to Asn2–Arg174.

The protein belongs to the dihydrofolate reductase family. In terms of assembly, homodimer.

It carries out the reaction (6S)-5,6,7,8-tetrahydrofolate + NADP(+) = 7,8-dihydrofolate + NADPH + H(+). It participates in cofactor biosynthesis; tetrahydrofolate biosynthesis; 5,6,7,8-tetrahydrofolate from 7,8-dihydrofolate: step 1/1. Its function is as follows. Key enzyme in folate metabolism. Catalyzes an essential reaction for de novo glycine and purine synthesis, and for DNA precursor synthesis. The chain is Dihydrofolate reductase type A10 (dfrA10) from Escherichia coli.